The sequence spans 124 residues: p53-regulated apoptosis-inducing protein 1 (124 aa).

Positions 1–16 (MGSSSEASFRSAQASC) are enriched in polar residues. The interval 1-46 (MGSSSEASFRSAQASCSGARRQGLGRGDQNLSVMPPNGRAQTHTPG) is disordered.

In terms of tissue distribution, only found to be expressed in thymus.

Its subcellular location is the mitochondrion. In terms of biological role, may play an important role in mediating p53/TP53-dependent apoptosis. The polypeptide is p53-regulated apoptosis-inducing protein 1 (TP53AIP1) (Homo sapiens (Human)).